The chain runs to 461 residues: Nuclear distribution protein PAC1 (461 aa).

In terms of domain architecture, LisH spans 9 to 41 (QAEELHKSIIAYLTANNLLNTANTLRAELNLSE). 7 WD repeats span residues 114–155 (SHRD…RTIK), 157–197 (HTRA…KNIR), 201–248 (GHDH…CVRT), 251–290 (GHTAWVRDVYPSPDGRFLLSTGDDSTARLWDISVSNPESK), 312–355 (QYLS…LMTL), 357–396 (GHDNWIRALAFHPGGKYLFSVSDDRTLRCWDLSQEGKCIK), and 401–457 (AHER…MKLR).

It belongs to the WD repeat LIS1/nudF family. In terms of assembly, self-associates. Interacts with NDL1 and dynein.

Its subcellular location is the cytoplasm. It localises to the cytoskeleton. The protein localises to the spindle pole. Functionally, positively regulates the activity of the minus-end directed microtubule motor protein dynein. May enhance dynein-mediated microtubule sliding by targeting dynein to the microtubule plus end. Required for nuclear migration during vegetative growth as well as development. Required for retrograde early endosome (EE) transport from the hyphal tip. Required for localization of dynein to the mitotic spindle poles. Recruits additional proteins to the dynein complex at SPBs. The polypeptide is Nuclear distribution protein PAC1 (Arthroderma otae (strain ATCC MYA-4605 / CBS 113480) (Microsporum canis)).